The chain runs to 256 residues: MKIILSPAKTMADPEKTMLRPEIESEIIMTRPVFEQRAQALIRLLKGFSEIELKALFKVSDAIARKTLDQINGFGETRPVPAIFAFQGAVYKALAPEAFTGESLVFCRQNLVILSALYGVLNPFDAVFAHRLDFTCKLECGANMTLRKFWTSPIHEWFDENLAADEFIVNLASDEYASLVTKGGLKARVITLAFMEKKGGVLKTVAAHSKQARGLFLRQIVQQRVTEPGMIKSFKVAGYTYDGKISQKNRWVFVLK.

It belongs to the UPF0246 family.

This Desulforapulum autotrophicum (strain ATCC 43914 / DSM 3382 / VKM B-1955 / HRM2) (Desulfobacterium autotrophicum) protein is UPF0246 protein HRM2_41860.